The chain runs to 304 residues: 4-diphosphocytidyl-2-C-methyl-D-erythritol kinase (304 aa).

Residue K18 is part of the active site. ATP is bound at residue P103–A113. Residue D145 is part of the active site.

This sequence belongs to the GHMP kinase family. IspE subfamily.

The catalysed reaction is 4-CDP-2-C-methyl-D-erythritol + ATP = 4-CDP-2-C-methyl-D-erythritol 2-phosphate + ADP + H(+). It functions in the pathway isoprenoid biosynthesis; isopentenyl diphosphate biosynthesis via DXP pathway; isopentenyl diphosphate from 1-deoxy-D-xylulose 5-phosphate: step 3/6. In terms of biological role, catalyzes the phosphorylation of the position 2 hydroxy group of 4-diphosphocytidyl-2C-methyl-D-erythritol. The sequence is that of 4-diphosphocytidyl-2-C-methyl-D-erythritol kinase from Rhodospirillum rubrum (strain ATCC 11170 / ATH 1.1.1 / DSM 467 / LMG 4362 / NCIMB 8255 / S1).